A 593-amino-acid polypeptide reads, in one-letter code: Probable translation initiation factor IF-2 (593 aa).

A tr-type G domain is found at 7–221 (IRTPIVCVMG…VLIGLAQRYM (215 aa)). Residues 16 to 23 (GHVDHGKT) form a G1 region. 16 to 23 (GHVDHGKT) contributes to the GTP binding site. Positions 41–45 (EITQH) are G2. The segment at 77-80 (DTPG) is G3. Residues 77–81 (DTPGH) and 131–134 (NKVD) contribute to the GTP site. The tract at residues 131 to 134 (NKVD) is G4. A G5 region spans residues 199 to 201 (SAL).

This sequence belongs to the TRAFAC class translation factor GTPase superfamily. Classic translation factor GTPase family. IF-2 subfamily.

In terms of biological role, function in general translation initiation by promoting the binding of the formylmethionine-tRNA to ribosomes. Seems to function along with eIF-2. In Methanoculleus marisnigri (strain ATCC 35101 / DSM 1498 / JR1), this protein is Probable translation initiation factor IF-2.